The sequence spans 119 residues: NADH-quinone oxidoreductase subunit A (119 aa).

The next 3 membrane-spanning stretches (helical) occupy residues 7–27 (FPVL…MSIG), 63–83 (LIAI…PWGV), and 88–108 (IGWP…VGFV).

It belongs to the complex I subunit 3 family. As to quaternary structure, NDH-1 is composed of 14 different subunits. Subunits NuoA, H, J, K, L, M, N constitute the membrane sector of the complex.

Its subcellular location is the cell inner membrane. It catalyses the reaction a quinone + NADH + 5 H(+)(in) = a quinol + NAD(+) + 4 H(+)(out). Its function is as follows. NDH-1 shuttles electrons from NADH, via FMN and iron-sulfur (Fe-S) centers, to quinones in the respiratory chain. The immediate electron acceptor for the enzyme in this species is believed to be ubiquinone. Couples the redox reaction to proton translocation (for every two electrons transferred, four hydrogen ions are translocated across the cytoplasmic membrane), and thus conserves the redox energy in a proton gradient. This is NADH-quinone oxidoreductase subunit A from Cupriavidus pinatubonensis (strain JMP 134 / LMG 1197) (Cupriavidus necator (strain JMP 134)).